We begin with the raw amino-acid sequence, 444 residues long: Spermatogenesis-associated protein 1 (444 aa).

Residues 145 to 160 (GTIHRPDSLSLSKDEP) are compositionally biased toward basic and acidic residues. The tract at residues 145–229 (GTIHRPDSLS…DEGEEDDKAT (85 aa)) is disordered. Residues 268 to 403 (SLLKIEREKI…RKLDTDKMKL (136 aa)) adopt a coiled-coil conformation.

Interacts with IFT20.

It is found in the cytoplasmic vesicle. Its subcellular location is the secretory vesicle. The protein resides in the acrosome. The protein is Spermatogenesis-associated protein 1 (Spata1) of Rattus norvegicus (Rat).